Here is an 881-residue protein sequence, read N- to C-terminus: Tyrosine-protein kinase receptor TYRO3 (881 aa).

The N-terminal stretch at 1–28 is a signal peptide; it reads MVNPGPPGLIAGLLLAALSLSSVDGTKA. 2 Ig-like C2-type domains span residues 29 to 114 and 125 to 206; these read LGFV…KSVS and PYFT…AIVE. The Extracellular portion of the chain corresponds to 29–414; the sequence is LGFVGHGYNM…QRHPHTRMSW (386 aa). 2 N-linked (GlcNAc...) asparagine glycosylation sites follow: Asn37 and Asn49. An intrachain disulfide couples Cys50 to Cys103. Residue Asn143 is glycosylated (N-linked (GlcNAc...) asparagine). Cys146 and Cys189 form a disulfide bridge. Fibronectin type-III domains are found at residues 213-306 and 311-401; these read PPFN…TKEK and IPQN…SKEE. 4 N-linked (GlcNAc...) asparagine glycosylation sites follow: Asn216, Asn279, Asn351, and Asn365. Residues 415–435 traverse the membrane as a helical segment; the sequence is VPMVLGILTALVTVVAMTLIF. At 436–881 the chain is on the cytoplasmic side; the sequence is LRKGRKETRF…MQEEQVVITL (446 aa). The 272-residue stretch at 503–774 folds into the Protein kinase domain; the sequence is FTLGRTLGKG…VDLKRRLEAI (272 aa). Residues 509 to 517 and Lys535 contribute to the ATP site; that span reads LGKGEFGSV. Asp640 acts as the Proton acceptor in catalysis. Phosphotyrosine; by autocatalysis is present on Tyr671. The disordered stretch occupies residues 846–881; that stretch reads EWSSSAQNGEARGLLHEEEEEEEEEEMQEEQVVITL. A compositionally biased stretch (acidic residues) spans 862-874; that stretch reads EEEEEEEEEEMQE.

This sequence belongs to the protein kinase superfamily. Tyr protein kinase family. AXL/UFO subfamily. Tyrosine phosphorylated upon receptor stimulation.

The protein localises to the cell membrane. The enzyme catalyses L-tyrosyl-[protein] + ATP = O-phospho-L-tyrosyl-[protein] + ADP + H(+). In terms of biological role, may be involved in cell adhesion processes, particularly in the central nervous system. The sequence is that of Tyrosine-protein kinase receptor TYRO3 (tyro3) from Xenopus tropicalis (Western clawed frog).